A 316-amino-acid polypeptide reads, in one-letter code: Putative transketolase C-terminal section (316 aa).

This sequence belongs to the transketolase family. Thiamine diphosphate is required as a cofactor.

It carries out the reaction D-sedoheptulose 7-phosphate + D-glyceraldehyde 3-phosphate = aldehydo-D-ribose 5-phosphate + D-xylulose 5-phosphate. The polypeptide is Putative transketolase C-terminal section (Methanocaldococcus jannaschii (strain ATCC 43067 / DSM 2661 / JAL-1 / JCM 10045 / NBRC 100440) (Methanococcus jannaschii)).